A 66-amino-acid polypeptide reads, in one-letter code: MKTNDIRELTTAEIETKVKALKEELFNLRFQLATGQLENPTRIREVRKAIARMKTVVREREIGINR.

Belongs to the universal ribosomal protein uL29 family.

The polypeptide is Large ribosomal subunit protein uL29 (Bacillus anthracis (strain CDC 684 / NRRL 3495)).